We begin with the raw amino-acid sequence, 311 residues long: Methionyl-tRNA formyltransferase (311 aa).

Residue 112–115 (SLLP) participates in (6S)-5,6,7,8-tetrahydrofolate binding.

This sequence belongs to the Fmt family.

It catalyses the reaction L-methionyl-tRNA(fMet) + (6R)-10-formyltetrahydrofolate = N-formyl-L-methionyl-tRNA(fMet) + (6S)-5,6,7,8-tetrahydrofolate + H(+). Attaches a formyl group to the free amino group of methionyl-tRNA(fMet). The formyl group appears to play a dual role in the initiator identity of N-formylmethionyl-tRNA by promoting its recognition by IF2 and preventing the misappropriation of this tRNA by the elongation apparatus. The protein is Methionyl-tRNA formyltransferase of Bartonella henselae (strain ATCC 49882 / DSM 28221 / CCUG 30454 / Houston 1) (Rochalimaea henselae).